Here is a 342-residue protein sequence, read N- to C-terminus: Oxygen-dependent coproporphyrinogen-III oxidase (342 aa).

Serine 107 provides a ligand contact to substrate. A divalent metal cation is bound by residues histidine 111 and histidine 121. The active-site Proton donor is the histidine 121. Residue asparagine 123–arginine 125 coordinates substrate. Positions 155 and 185 each coordinate a divalent metal cation. The tract at residues tyrosine 277–glutamate 312 is important for dimerization.

It belongs to the aerobic coproporphyrinogen-III oxidase family. Homodimer. A divalent metal cation serves as cofactor.

It is found in the cytoplasm. It catalyses the reaction coproporphyrinogen III + O2 + 2 H(+) = protoporphyrinogen IX + 2 CO2 + 2 H2O. Its pathway is porphyrin-containing compound metabolism; protoporphyrin-IX biosynthesis; protoporphyrinogen-IX from coproporphyrinogen-III (O2 route): step 1/1. In terms of biological role, involved in the heme and chlorophyll biosynthesis. Catalyzes the aerobic oxidative decarboxylation of propionate groups of rings A and B of coproporphyrinogen-III to yield the vinyl groups in protoporphyrinogen-IX. The polypeptide is Oxygen-dependent coproporphyrinogen-III oxidase (Synechococcus sp. (strain ATCC 27144 / PCC 6301 / SAUG 1402/1) (Anacystis nidulans)).